A 483-amino-acid polypeptide reads, in one-letter code: Cobyric acid synthase (483 aa).

Residues 251–438 (SLVVAVPMLP…LHGVFNADEF (188 aa)) form the GATase cobBQ-type domain. Catalysis depends on Cys-333, which acts as the Nucleophile. His-430 is an active-site residue.

It belongs to the CobB/CobQ family. CobQ subfamily.

Its pathway is cofactor biosynthesis; adenosylcobalamin biosynthesis. Functionally, catalyzes amidations at positions B, D, E, and G on adenosylcobyrinic A,C-diamide. NH(2) groups are provided by glutamine, and one molecule of ATP is hydrogenolyzed for each amidation. The polypeptide is Cobyric acid synthase (Brucella anthropi (strain ATCC 49188 / DSM 6882 / CCUG 24695 / JCM 21032 / LMG 3331 / NBRC 15819 / NCTC 12168 / Alc 37) (Ochrobactrum anthropi)).